A 149-amino-acid polypeptide reads, in one-letter code: Deoxyuridine 5'-triphosphate nucleotidohydrolase (149 aa).

Substrate contacts are provided by residues 68-70 (RSG), Asn81, 85-87 (LID), and Met95.

It belongs to the dUTPase family. Mg(2+) is required as a cofactor.

It catalyses the reaction dUTP + H2O = dUMP + diphosphate + H(+). It participates in pyrimidine metabolism; dUMP biosynthesis; dUMP from dCTP (dUTP route): step 2/2. Functionally, this enzyme is involved in nucleotide metabolism: it produces dUMP, the immediate precursor of thymidine nucleotides and it decreases the intracellular concentration of dUTP so that uracil cannot be incorporated into DNA. The protein is Deoxyuridine 5'-triphosphate nucleotidohydrolase of Albidiferax ferrireducens (strain ATCC BAA-621 / DSM 15236 / T118) (Rhodoferax ferrireducens).